We begin with the raw amino-acid sequence, 322 residues long: Cysteine protease YopT (322 aa).

Residues Cys139, His258, and Asp274 contribute to the active site.

Belongs to the peptidase C58 family. In terms of assembly, interacts with human ARHA.

The protein localises to the secreted. Cysteine protease, which is translocated into infected cells and plays a central role in pathogenesis by cleaving the C-terminus end of the human small GTPase RhoA/ARHA, a regulator of cytoskeleton. Once cleaved, ARHA loses its lipid modification, and is released from the cell membrane, leading to the subsequent disruption of actin cytoskeleton of the host cell. The protein is Cysteine protease YopT (yopT) of Yersinia pseudotuberculosis serotype I (strain IP32953).